The chain runs to 529 residues: Bifunctional purine biosynthesis protein PurH (529 aa).

Residues 1–148 enclose the MGS-like domain; sequence MQQRRPVRRA…KNHKDVAIVV (148 aa). An N6-acetyllysine modification is found at K287.

The protein belongs to the PurH family.

The enzyme catalyses (6R)-10-formyltetrahydrofolate + 5-amino-1-(5-phospho-beta-D-ribosyl)imidazole-4-carboxamide = 5-formamido-1-(5-phospho-D-ribosyl)imidazole-4-carboxamide + (6S)-5,6,7,8-tetrahydrofolate. The catalysed reaction is IMP + H2O = 5-formamido-1-(5-phospho-D-ribosyl)imidazole-4-carboxamide. It participates in purine metabolism; IMP biosynthesis via de novo pathway; 5-formamido-1-(5-phospho-D-ribosyl)imidazole-4-carboxamide from 5-amino-1-(5-phospho-D-ribosyl)imidazole-4-carboxamide (10-formyl THF route): step 1/1. The protein operates within purine metabolism; IMP biosynthesis via de novo pathway; IMP from 5-formamido-1-(5-phospho-D-ribosyl)imidazole-4-carboxamide: step 1/1. This Escherichia coli O127:H6 (strain E2348/69 / EPEC) protein is Bifunctional purine biosynthesis protein PurH.